The sequence spans 377 residues: Guanine nucleotide-binding protein subunit beta (377 aa).

WD repeat units lie at residues 63–93, 105–135, 154–185, 202–233, 246–276, 293–323, and 339–369; these read GHTG…IVWN, LPCA…SIFN, GHKG…VLWD, GHTA…RLWD, GHES…RLFD, GDIP…YVWD, and SHEG…KIWA.

It belongs to the WD repeat G protein beta family. G proteins are composed of 3 units, alpha, beta and gamma.

Guanine nucleotide-binding proteins (G proteins) are involved as a modulator or transducer in various transmembrane signaling systems. The beta and gamma chains are required for the GTPase activity, for replacement of GDP by GTP, and for G protein-effector interaction. This chain is Guanine nucleotide-binding protein subunit beta (GB1), found in Solanum tuberosum (Potato).